Consider the following 850-residue polypeptide: Vacuolar membrane protease (850 aa).

Residues 1–20 are Cytoplasmic-facing; that stretch reads MASSRAQWFNPIAFTPWPVT. The helical transmembrane segment at 21 to 41 threads the bilayer; the sequence is CITTIVYLALLIPILVINLVV. At 42–282 the chain is on the vacuolar side; sequence PSAPETNPKG…DGKSKDQNKV (241 aa). N53, N116, and N119 each carry an N-linked (GlcNAc...) asparagine glycan. Zn(2+) contacts are provided by H175 and D187. E221 serves as the catalytic Proton acceptor. E222 lines the Zn(2+) pocket. Residues 283–303 form a helical membrane-spanning segment; the sequence is NSGTGTLGVWFDMFGTAFAVF. Residues 304-308 lie on the Cytoplasmic side of the membrane; that stretch reads RLHTL. Residues 309–329 traverse the membrane as a helical segment; it reads FAISVALLVIAPLVIFVTSVI. At 330–363 the chain is on the vacuolar side; sequence LSKTDRMYLFSMSKSLEGTGDQVSLRGLRGFSRT. Residues 364–384 form a helical membrane-spanning segment; the sequence is PIILVIATTIPICLAYLLEKV. The Cytoplasmic portion of the chain corresponds to 385 to 393; it reads NPYIVHSSQ. The chain crosses the membrane as a helical span at residues 394 to 414; sequence FSVWSMMFSAWIFLAWFLACA. The Vacuolar segment spans residues 415 to 425; that stretch reads ADFFRPSALHR. The helical transmembrane segment at 426–446 threads the bilayer; sequence AYSYTWIFIATWIMLVINTVY. At 447–529 the chain is on the cytoplasmic side; sequence ANQKGIAAGP…TLPRWTWVLQ (83 aa). A helical transmembrane segment spans residues 530–550; the sequence is LLLLAPIVLILVGQLALFLTA. The Vacuolar portion of the chain corresponds to 551-563; sequence SMCQVGSDGVSTF. The chain crosses the membrane as a helical span at residues 564 to 584; the sequence is VVYLACSVFTTLLCIPLFPLI. Residues 585-590 are Cytoplasmic-facing; the sequence is HRFTYH. Residues 591-611 traverse the membrane as a helical segment; the sequence is IPTFLFLVFIGTLIYNLVAFP. The Vacuolar segment spans residues 612-850; sequence FSPANRLKTF…VEASHSFTIQ (239 aa). N-linked (GlcNAc...) asparagine glycans are attached at residues N630, N658, and N702.

This sequence belongs to the peptidase M28 family. Zn(2+) serves as cofactor.

The protein localises to the vacuole membrane. Functionally, may be involved in vacuolar sorting and osmoregulation. The polypeptide is Vacuolar membrane protease (Ajellomyces capsulatus (strain NAm1 / WU24) (Darling's disease fungus)).